The following is a 124-amino-acid chain: Small ribosomal subunit protein uS12 (124 aa).

Asp-89 carries the 3-methylthioaspartic acid modification.

Belongs to the universal ribosomal protein uS12 family. Part of the 30S ribosomal subunit. Contacts proteins S8 and S17. May interact with IF1 in the 30S initiation complex.

With S4 and S5 plays an important role in translational accuracy. Functionally, interacts with and stabilizes bases of the 16S rRNA that are involved in tRNA selection in the A site and with the mRNA backbone. Located at the interface of the 30S and 50S subunits, it traverses the body of the 30S subunit contacting proteins on the other side and probably holding the rRNA structure together. The combined cluster of proteins S8, S12 and S17 appears to hold together the shoulder and platform of the 30S subunit. The polypeptide is Small ribosomal subunit protein uS12 (Leptospira biflexa serovar Patoc (strain Patoc 1 / Ames)).